The following is a 291-amino-acid chain: Pantothenate synthetase (291 aa).

30 to 37 (MGNLHEGH) serves as a coordination point for ATP. Residue His37 is the Proton donor of the active site. Residue Gln61 participates in (R)-pantoate binding. Gln61 provides a ligand contact to beta-alanine. 149-152 (GEKD) is a binding site for ATP. Gln155 provides a ligand contact to (R)-pantoate. Residues Val178 and 186 to 189 (MSSR) contribute to the ATP site.

It belongs to the pantothenate synthetase family. Homodimer.

Its subcellular location is the cytoplasm. It catalyses the reaction (R)-pantoate + beta-alanine + ATP = (R)-pantothenate + AMP + diphosphate + H(+). It functions in the pathway cofactor biosynthesis; (R)-pantothenate biosynthesis; (R)-pantothenate from (R)-pantoate and beta-alanine: step 1/1. In terms of biological role, catalyzes the condensation of pantoate with beta-alanine in an ATP-dependent reaction via a pantoyl-adenylate intermediate. This is Pantothenate synthetase from Aliivibrio fischeri (strain ATCC 700601 / ES114) (Vibrio fischeri).